A 205-amino-acid chain; its full sequence is dTTP/UTP pyrophosphatase (205 aa).

Aspartate 71 acts as the Proton acceptor in catalysis.

It belongs to the Maf family. YhdE subfamily. The cofactor is a divalent metal cation.

It is found in the cytoplasm. The enzyme catalyses dTTP + H2O = dTMP + diphosphate + H(+). It carries out the reaction UTP + H2O = UMP + diphosphate + H(+). In terms of biological role, nucleoside triphosphate pyrophosphatase that hydrolyzes dTTP and UTP. May have a dual role in cell division arrest and in preventing the incorporation of modified nucleotides into cellular nucleic acids. The chain is dTTP/UTP pyrophosphatase from Syntrophus aciditrophicus (strain SB).